The chain runs to 382 residues: Na(+)/H(+) antiporter NhaA (382 aa).

Transmembrane regions (helical) follow at residues 14–34, 47–67, 87–107, 117–137, 146–166, 171–191, 205–225, 247–267, 271–291, 321–341, and 353–373; these read AGGILLVIAAAIAMVIANSAM, FGMSVSHWINDGLMAVFFLLI, IFPAIAAVGGMLAPALIYVAF, GWAIPAATDIAFALGIMALLG, VFLLALAIIDDLGVVVIIALF, LSTIALTIGFIMTGVLFMLNA, LILWIAVLKSGVHATLAGVVI, ALHPYVAFAILPVFAFANAGI, GVSLAGLTSMLPLGVALGLFL, IFAVSVLCGIGFTMSIFISSL, and YARLGILMGSTTAALLGYSLL.

The protein belongs to the NhaA Na(+)/H(+) (TC 2.A.33) antiporter family.

Its subcellular location is the cell inner membrane. The catalysed reaction is Na(+)(in) + 2 H(+)(out) = Na(+)(out) + 2 H(+)(in). In terms of biological role, na(+)/H(+) antiporter that extrudes sodium in exchange for external protons. This chain is Na(+)/H(+) antiporter NhaA, found in Vibrio cholerae serotype O1 (strain ATCC 39541 / Classical Ogawa 395 / O395).